The sequence spans 514 residues: Serine--tRNA ligase, cytoplasmic (514 aa).

At Met1 the chain carries N-acetylmethionine. Residues 9–61 (RVDKGGDPALIRETQEKRFKDPGLVDQLVKADSEWRRCRFRADNLNKLKNLCS) form an interaction with tRNA region. Residue Ser241 is modified to Phosphoserine. Residues Thr271 and Arg302 each contribute to the L-serine site. ATP is bound by residues 302–304 (RQE) and 318–321 (VHQF). Position 323 is an N6-acetyllysine (Lys323). Glu325 is a binding site for L-serine. Residue 391 to 394 (ELVS) participates in ATP binding. Asn427 contacts L-serine. Residues 473-514 (PAPIEQEPSKKQKKQHEGSKKKAAARDVTLENRLQNMEVTDA) form a disordered region. Positions 479-502 (EPSKKQKKQHEGSKKKAAARDVTL) are enriched in basic and acidic residues. Residues 482–494 (KKQKKQHEGSKKK) carry the Nuclear localization signal motif. Residues 504–514 (NRLQNMEVTDA) are compositionally biased toward polar residues.

This sequence belongs to the class-II aminoacyl-tRNA synthetase family. Type-1 seryl-tRNA synthetase subfamily. As to quaternary structure, homodimer. The tRNA molecule may bind across the dimer. Interacts with SIRT2. Interacts with METTL6; interaction is required for the tRNA N(3)-methylcytidine methyltransferase activity of METTL6. Brain.

It is found in the cytoplasm. The protein localises to the nucleus. It carries out the reaction tRNA(Ser) + L-serine + ATP = L-seryl-tRNA(Ser) + AMP + diphosphate + H(+). The catalysed reaction is tRNA(Sec) + L-serine + ATP = L-seryl-tRNA(Sec) + AMP + diphosphate + H(+). It participates in aminoacyl-tRNA biosynthesis; selenocysteinyl-tRNA(Sec) biosynthesis; L-seryl-tRNA(Sec) from L-serine and tRNA(Sec): step 1/1. In terms of biological role, catalyzes the attachment of serine to tRNA(Ser) in a two-step reaction: serine is first activated by ATP to form Ser-AMP and then transferred to the acceptor end of tRNA(Ser). Is probably also able to aminoacylate tRNA(Sec) with serine, to form the misacylated tRNA L-seryl-tRNA(Sec), which will be further converted into selenocysteinyl-tRNA(Sec). In the nucleus, binds to the VEGFA core promoter and prevents MYC binding and transcriptional activation by MYC. Recruits SIRT2 to the VEGFA promoter, promoting deacetylation of histone H4 at 'Lys-16' (H4K16). Thereby, inhibits the production of VEGFA and sprouting angiogenesis mediated by VEGFA. The protein is Serine--tRNA ligase, cytoplasmic of Homo sapiens (Human).